The following is a 619-amino-acid chain: Putative zinc metalloprotease CT_072 (619 aa).

Residue H20 participates in Zn(2+) binding. The active site involves E21. Residue H24 participates in Zn(2+) binding. The next 3 membrane-spanning stretches (helical) occupy residues 103 to 125, 558 to 580, and 593 to 610; these read IFVL…GILY, VLNL…WEIL, and ALVP…FLTL.

It belongs to the peptidase M50B family. Requires Zn(2+) as cofactor.

Its subcellular location is the cell inner membrane. This is Putative zinc metalloprotease CT_072 from Chlamydia trachomatis serovar D (strain ATCC VR-885 / DSM 19411 / UW-3/Cx).